Reading from the N-terminus, the 231-residue chain is Uracil phosphoribosyltransferase (231 aa).

Residue 38–42 coordinates GTP; that stretch reads KGLVR. 5-phospho-alpha-D-ribose 1-diphosphate contacts are provided by residues arginine 87, arginine 112, and 140 to 148; that span reads DPMIATGST. Uracil-binding positions include isoleucine 203 and 208–210; that span reads GDA. 5-phospho-alpha-D-ribose 1-diphosphate is bound at residue aspartate 209.

Belongs to the UPRTase family. It depends on Mg(2+) as a cofactor.

It carries out the reaction UMP + diphosphate = 5-phospho-alpha-D-ribose 1-diphosphate + uracil. It functions in the pathway pyrimidine metabolism; UMP biosynthesis via salvage pathway; UMP from uracil: step 1/1. Allosterically activated by GTP. In terms of biological role, catalyzes the conversion of uracil and 5-phospho-alpha-D-ribose 1-diphosphate (PRPP) to UMP and diphosphate. The protein is Uracil phosphoribosyltransferase of Methanococcus maripaludis (strain DSM 14266 / JCM 13030 / NBRC 101832 / S2 / LL).